A 979-amino-acid chain; its full sequence is Oncostatin-M-specific receptor subunit beta (979 aa).

The first 27 residues, 1 to 27 (MALFAVFQTTFFLTLLSLRTYQSEVLA), serve as a signal peptide directing secretion. Over 28 to 740 (ERLPLTPVSL…VTTPDEHSSM (713 aa)) the chain is Extracellular. Asparagine 163 carries N-linked (GlcNAc...) asparagine glycosylation. An intrachain disulfide couples cysteine 245 to cysteine 255. 2 N-linked (GlcNAc...) asparagine glycosylation sites follow: asparagine 326 and asparagine 380. 4 Fibronectin type-III domains span residues 335 to 428 (NPFS…TLEA), 433 to 528 (APDV…DPEN), 529 to 623 (KEVE…SQEL), and 625 to 736 (PSDN…TPDE). Residues 415–419 (WSEWS) carry the WSXWS motif motif. Residues asparagine 446 and asparagine 580 are each glycosylated (N-linked (GlcNAc...) asparagine). The chain crosses the membrane as a helical span at residues 741 to 761 (LIHILLPMVFCVLLIMVMCYL). The Cytoplasmic segment spans residues 762 to 979 (KSQWIKETCY…TLLDPGEHYC (218 aa)). Residues 770-778 (CYPDIPDPY) carry the Box 1 motif motif. 2 positions are modified to phosphoserine: serine 826 and serine 889.

Belongs to the type I cytokine receptor family. Type 2 subfamily. In terms of assembly, heterodimer composed of OSMR and IL6ST (type II OSM receptor). Heterodimer with IL31RA to form the IL31 receptor. As to expression, expressed in keratinocytes (at protein level). Expressed at relatively high levels in all neural cells as well as fibroblast and epithelial cells.

It is found in the membrane. In terms of biological role, associates with IL31RA to form the IL31 receptor. Binds IL31 to activate STAT3 and possibly STAT1 and STAT5. Capable of transducing OSM-specific signaling events. The polypeptide is Oncostatin-M-specific receptor subunit beta (OSMR) (Homo sapiens (Human)).